A 312-amino-acid chain; its full sequence is Adenylyl-sulfate kinase, chloroplastic (312 aa).

Residue 142–149 (GLSGSGKS) participates in ATP binding. Ser-216 serves as the catalytic Phosphoserine intermediate.

The protein belongs to the APS kinase family.

The protein localises to the plastid. It localises to the chloroplast. The catalysed reaction is adenosine 5'-phosphosulfate + ATP = 3'-phosphoadenylyl sulfate + ADP + H(+). The protein operates within sulfur metabolism; hydrogen sulfide biosynthesis; sulfite from sulfate: step 2/3. In terms of biological role, catalyzes the synthesis of activated sulfate. The chain is Adenylyl-sulfate kinase, chloroplastic (AKN) from Catharanthus roseus (Madagascar periwinkle).